Reading from the N-terminus, the 137-residue chain is Probable leaf thionin (137 aa).

Positions 1 to 28 (MATNKSIKSVVICVLILGLVLEQVQVEG) are cleaved as a signal peptide. 4 cysteine pairs are disulfide-bonded: Cys-31–Cys-68, Cys-32–Cys-60, Cys-40–Cys-58, and Cys-44–Cys-54. The propeptide at 75 to 137 (LNLLPESGEP…DGDVIQSVEA (63 aa)) is acidic domain.

The protein belongs to the plant thionin (TC 1.C.44) family. 4 C-C subfamily.

It localises to the secreted. Functionally, thionins are small plant proteins which are toxic to animal cells. They seem to exert their toxic effect at the level of the cell membrane. Their precise function is not known. The sequence is that of Probable leaf thionin from Hordeum vulgare (Barley).